The following is a 184-amino-acid chain: ATP synthase subunit b, chloroplastic (184 aa).

A helical transmembrane segment spans residues 27–49; that stretch reads LATNLINLSVVLGVLIFFGKGVL.

Belongs to the ATPase B chain family. F-type ATPases have 2 components, F(1) - the catalytic core - and F(0) - the membrane proton channel. F(1) has five subunits: alpha(3), beta(3), gamma(1), delta(1), epsilon(1). F(0) has four main subunits: a(1), b(1), b'(1) and c(10-14). The alpha and beta chains form an alternating ring which encloses part of the gamma chain. F(1) is attached to F(0) by a central stalk formed by the gamma and epsilon chains, while a peripheral stalk is formed by the delta, b and b' chains.

It is found in the plastid. Its subcellular location is the chloroplast thylakoid membrane. F(1)F(0) ATP synthase produces ATP from ADP in the presence of a proton or sodium gradient. F-type ATPases consist of two structural domains, F(1) containing the extramembraneous catalytic core and F(0) containing the membrane proton channel, linked together by a central stalk and a peripheral stalk. During catalysis, ATP synthesis in the catalytic domain of F(1) is coupled via a rotary mechanism of the central stalk subunits to proton translocation. Functionally, component of the F(0) channel, it forms part of the peripheral stalk, linking F(1) to F(0). This chain is ATP synthase subunit b, chloroplastic, found in Guizotia abyssinica (Niger).